We begin with the raw amino-acid sequence, 111 residues long: Ribosome-binding factor A (111 aa).

It belongs to the RbfA family. Monomer. Binds 30S ribosomal subunits, but not 50S ribosomal subunits or 70S ribosomes.

The protein resides in the cytoplasm. One of several proteins that assist in the late maturation steps of the functional core of the 30S ribosomal subunit. Associates with free 30S ribosomal subunits (but not with 30S subunits that are part of 70S ribosomes or polysomes). Required for efficient processing of 16S rRNA. May interact with the 5'-terminal helix region of 16S rRNA. In Helicobacter acinonychis (strain Sheeba), this protein is Ribosome-binding factor A.